Reading from the N-terminus, the 231-residue chain is UPF0758 protein aq_1610 (231 aa).

The region spanning 110–231 (SIRNPQEAFE…YFSFREEGVL (122 aa)) is the MPN domain. Histidine 180, histidine 182, and aspartate 193 together coordinate Zn(2+). The JAMM motif motif lies at 180–193 (HNHPQGEPSPSNED).

Belongs to the UPF0758 family.

The protein is UPF0758 protein aq_1610 of Aquifex aeolicus (strain VF5).